Here is a 250-residue protein sequence, read N- to C-terminus: tRNA (guanine-N(1)-)-methyltransferase (250 aa).

S-adenosyl-L-methionine contacts are provided by residues glycine 115 and 135 to 140; that span reads LGDFVL.

It belongs to the RNA methyltransferase TrmD family. Homodimer.

It is found in the cytoplasm. The enzyme catalyses guanosine(37) in tRNA + S-adenosyl-L-methionine = N(1)-methylguanosine(37) in tRNA + S-adenosyl-L-homocysteine + H(+). In terms of biological role, specifically methylates guanosine-37 in various tRNAs. This Legionella pneumophila (strain Paris) protein is tRNA (guanine-N(1)-)-methyltransferase.